Reading from the N-terminus, the 346-residue chain is Phenylalanine--tRNA ligase alpha subunit (346 aa).

Glu260 lines the Mg(2+) pocket.

It belongs to the class-II aminoacyl-tRNA synthetase family. Phe-tRNA synthetase alpha subunit type 1 subfamily. As to quaternary structure, tetramer of two alpha and two beta subunits. The cofactor is Mg(2+).

It is found in the cytoplasm. It catalyses the reaction tRNA(Phe) + L-phenylalanine + ATP = L-phenylalanyl-tRNA(Phe) + AMP + diphosphate + H(+). The sequence is that of Phenylalanine--tRNA ligase alpha subunit from Herpetosiphon aurantiacus (strain ATCC 23779 / DSM 785 / 114-95).